Consider the following 430-residue polypeptide: MIOREX complex component 4 (430 aa).

The transit peptide at 1–27 directs the protein to the mitochondrion; the sequence is MTVLYTSASLKKMKCLAFNMGMNCVRT. A helical membrane pass occupies residues 403–420; that stretch reads FLISLSALLASFFAYYRY.

As to quaternary structure, associates with the mitochondrial ribosome.

It is found in the mitochondrion. Its subcellular location is the mitochondrion membrane. Its function is as follows. Component of MIOREX complexes, large expressome-like assemblies of ribosomes with factors involved in all the steps of post-transcriptional gene expression. In Saccharomyces cerevisiae (strain ATCC 204508 / S288c) (Baker's yeast), this protein is MIOREX complex component 4.